Reading from the N-terminus, the 386-residue chain is Cytochrome b (386 aa).

A run of 4 helical transmembrane segments spans residues phenylalanine 32–methionine 52, tryptophan 76–glycine 98, threonine 113–valine 133, and phenylalanine 179–isoleucine 199. Residues histidine 82 and histidine 96 each coordinate heme b. Histidine 183 and histidine 197 together coordinate heme b. Histidine 202 is a binding site for a ubiquinone. Helical transmembrane passes span tyrosine 226–phenylalanine 246, leucine 290–aspartate 310, leucine 322–alanine 342, and phenylalanine 349–proline 369.

This sequence belongs to the cytochrome b family. Fungal cytochrome b-c1 complex contains 10 subunits; 3 respiratory subunits, 2 core proteins and 5 low-molecular weight proteins. Cytochrome b-c1 complex is a homodimer. The cofactor is heme b.

The protein localises to the mitochondrion inner membrane. In terms of biological role, component of the ubiquinol-cytochrome c reductase complex (complex III or cytochrome b-c1 complex) that is part of the mitochondrial respiratory chain. The b-c1 complex mediates electron transfer from ubiquinol to cytochrome c. Contributes to the generation of a proton gradient across the mitochondrial membrane that is then used for ATP synthesis. This Talaromyces marneffei (Penicillium marneffei) protein is Cytochrome b (cob).